The chain runs to 504 residues: Tegument protein VP16 homolog (504 aa).

Disordered stretches follow at residues 354 to 381, 395 to 421, and 435 to 486; these read EAGG…RLQR, ATPR…QGRR, and RSGP…ANPF. The span at 361–378 shows a compositional bias: low complexity; it reads RSGSTRTRGRAARSTTGR. Positions 447-460 are enriched in low complexity; it reads PVRSGLGLSRARGS.

It belongs to the herpesviridae tegument protein VP16 protein family. Associates with the VP16-induced complex; binding to host HCFC1 activates VP16 for association with the octamer motif-binding host protein POU2F1, to form a multiprotein-DNA complex responsible for activating transcription of the viral immediate early genes.

The protein localises to the virion tegument. The protein resides in the host nucleus. In terms of biological role, transcriptional activator of immediate-early (IE) gene products (alpha genes). Acts as a key activator of lytic infection by initiating the lytic program through the assembly of the transcriptional regulatory VP16-induced complex composed of VP16 and two cellular factors, HCFC1 and POU2F1. VP16-induced complex represents a regulatory switch: when it is on, it promotes IE-gene expression and thus lytic infection, and when it is off, it limits IE-gene transcription favoring latent infection. May play a role in the aggregation of tegument proteins around nucleocapsids during virus morphogenesis. The polypeptide is Tegument protein VP16 homolog (Bos taurus (Bovine)).